The following is a 377-amino-acid chain: Metallo-hydrolase mfmC (377 aa).

Residues H126, H128, D130, H131, H209, and D233 each coordinate Zn(2+).

This sequence belongs to the metallo-beta-lactamase superfamily.

Its pathway is secondary metabolite biosynthesis; terpenoid biosynthesis. Functionally, metallo-hydrolase; part of the gene cluster that mediates the biosynthesis of the phthalide-terpenoid hybrid 11'-O-desmethylfendlerol. Within the pathway, mfma and mfmC act together to convert 3,5-dimethylorsellinic acid (DMOA) into the phthalide 5,7-dihydroxy-4-(hydroxymethyl)-6-methylphthalide. The biosynthesis of 11'-O-desmethylfendlerol begins with the NR-PKS mfmB that forms 3,5-dimethylorsellinic acid (DMOA), which is then transformed into the phthalide 5,7-dihydroxy-4-(hydroxymethyl)-6-methylphthalide by the cytochrome P450 monooxygenase mfmA and the hydrolase mfmC. Subsequently, the methyltransferase mfmE catalyzes 7-O-methylation to yield 5-hydroxy-4-(hydroxymethyl)-7-methoxy-6-methylphthalide, which undergoes C-3 hydroxylation by the cytochrome P450 monooxygenase mfmF. The resultant cyclopolic acid (2,5-dihydroxy-4-(hydroxymethyl)-7-methoxy-6-methylphthalide) is then farnesylated by the DMATS-type prenyltransferase mfmD to afford 5-O-farnesylcyclopolic acid. Finally, the Pyr4-family terpene cyclase mfmH cyclizes the farnesyl moiety of 5-O-farnesylcyclopolic acid into a drimane-like structure, thus completing the biosynthesis of 11'-O-desmethylfendlerol. This Annulohypoxylon moriforme (Filamentous fungus) protein is Metallo-hydrolase mfmC.